The primary structure comprises 109 residues: Nucleoid-associated protein HS_1309 (109 aa).

It belongs to the YbaB/EbfC family. In terms of assembly, homodimer.

It localises to the cytoplasm. The protein resides in the nucleoid. Its function is as follows. Binds to DNA and alters its conformation. May be involved in regulation of gene expression, nucleoid organization and DNA protection. The polypeptide is Nucleoid-associated protein HS_1309 (Histophilus somni (strain 129Pt) (Haemophilus somnus)).